The primary structure comprises 694 residues: MATEQEFTRASRFSRDSSSVGYYSEEDNTEEEDEEEEEMEEIEEEEEEEEEEDPRIGLTCGGRRNGSSNNNKWMMLGRILDPRSKWVREWNKVFLLVCATGLFVDPLFLYTLSVSDTCMCLLVDGWLALTVTALRSMTDLLHLWNIWIQFKIARRWPYPGGDSDGDTNKGGGTRGSTRVAPPYVKKNGFFFDLFVILPLPQVVLWVVIPSLLKRGSVTLVVSVLLVTFLFQYLPKIYHSIRHLRRNATLSGYIFGTVWWGIALNMIAYFVAAHAAGACWYLLGVQRSAKCLKEQCENTIGCDLRMLSCKEPVYYGTTVMVLDRARLAWAQNHQARSVCLDINTNYTYGAYQWTIQLVSSESRLEKILFPIFWGLMTLSTFGNLESTTEWSEVVFNIIVLTSGLLLVTMLIGNIKVFLHATTSKKQAMHLKMRNIEWWMKKRHLPIGFRQRVRNYERQRWAAMRGVDECEMVQNLPEGLRRDIKYHLCLDLVRQVPLFQHMDDLVLENICDRVKSLIFTKGETIQKEGDAVQRMLFVVRGHLQSSQLLRDGVKSCCMLGPGNFSGDELLSWCLRRPFVERLPPSSSTLVTLETTEAFGLDAEDVKYVTQHFRYTFVNEKVKRSARYYSPGWRTWAAVAVQLAWRRYKHRLTLTSLSFIRPRRPLSRCASLGEDKLRLYAAILTSPKPNPDDFDDY.

Basic and acidic residues predominate over residues 1 to 15 (MATEQEFTRASRFSR). The interval 1–64 (MATEQEFTRA…RIGLTCGGRR (64 aa)) is disordered. Topologically, residues 1–92 (MATEQEFTRA…RSKWVREWNK (92 aa)) are cytoplasmic. Over residues 24 to 53 (SEEDNTEEEDEEEEEMEEIEEEEEEEEEED) the composition is skewed to acidic residues. The chain crosses the membrane as a helical span at residues 93 to 113 (VFLLVCATGLFVDPLFLYTLS). Residues 114–126 (VSDTCMCLLVDGW) are Extracellular-facing. Residues 127 to 147 (LALTVTALRSMTDLLHLWNIW) form a helical membrane-spanning segment. Over 148-187 (IQFKIARRWPYPGGDSDGDTNKGGGTRGSTRVAPPYVKKN) the chain is Cytoplasmic. A helical transmembrane segment spans residues 188 to 208 (GFFFDLFVILPLPQVVLWVVI). Topologically, residues 209 to 216 (PSLLKRGS) are extracellular. A helical transmembrane segment spans residues 217–237 (VTLVVSVLLVTFLFQYLPKIY). Topologically, residues 238–251 (HSIRHLRRNATLSG) are cytoplasmic. Residues 252 to 272 (YIFGTVWWGIALNMIAYFVAA) traverse the membrane as a helical segment. At 273–392 (HAAGACWYLL…LESTTEWSEV (120 aa)) the chain is on the extracellular side. A helical membrane pass occupies residues 393–413 (VFNIIVLTSGLLLVTMLIGNI). Over 414 to 694 (KVFLHATTSK…KPNPDDFDDY (281 aa)) the chain is Cytoplasmic. Residues 496–626 (LFQH…ARYY) and Asp565 contribute to the a nucleoside 3',5'-cyclic phosphate site. The segment at 610–626 (FRYTFVNEKVKRSARYY) is calmodulin-binding. Residues 631-660 (RTWAAVAVQLAWRRYKHRLTLTSLSFIRPR) form the IQ domain.

Belongs to the cyclic nucleotide-gated cation channel (TC 1.A.1.5) family. Homotetramer or heterotetramer.

The protein localises to the cell membrane. In terms of biological role, acts as a cyclic nucleotide-gated ion channel. Permeable to potassium and sodium in a cyclic nucleotide-dependent fashion (cAMP or cGMP). Might constitute a common downstream component of the signaling pathways leading to hypersensitive response (HR). The chain is Cyclic nucleotide-gated ion channel 4 (CNGC4) from Arabidopsis thaliana (Mouse-ear cress).